The following is a 174-amino-acid chain: ATP-dependent protease subunit HslV (174 aa).

T2 is an active-site residue. G157, D160, and T163 together coordinate Na(+).

Belongs to the peptidase T1B family. HslV subfamily. In terms of assembly, a double ring-shaped homohexamer of HslV is capped on each side by a ring-shaped HslU homohexamer. The assembly of the HslU/HslV complex is dependent on binding of ATP.

Its subcellular location is the cytoplasm. It catalyses the reaction ATP-dependent cleavage of peptide bonds with broad specificity.. Allosterically activated by HslU binding. In terms of biological role, protease subunit of a proteasome-like degradation complex believed to be a general protein degrading machinery. The protein is ATP-dependent protease subunit HslV of Aliivibrio fischeri (strain MJ11) (Vibrio fischeri).